The chain runs to 631 residues: Bromodomain-containing protein 9 (631 aa).

Disordered stretches follow at residues 1 to 26 (MGKK…PLEK) and 39 to 116 (VTEL…TLPK). Basic and acidic residues-rich tracts occupy residues 9-26 (RPEW…PLEK) and 50-63 (SYYD…WERH). Over residues 64–73 (KEKKKKKKKK) the composition is skewed to basic residues. Positions 74–85 (SEKEKYADDDER) are enriched in basic and acidic residues. Residues 86 to 96 (RRRKEEKKKKR) show a composition bias toward basic residues. The region spanning 166 to 270 (NEATPHQQLL…HTGFKMMSKQ (105 aa)) is the Bromo domain. The interval 244 to 246 (VYN) is histone H4K5ac H4K8ac and histone H4K5bu H4K8bu binding. The tract at residues 571–631 (ASVDRVGSRP…SPEPGSTANS (61 aa)) is disordered. Low complexity predominate over residues 581 to 590 (SSNLSSLSNA).

As to quaternary structure, binds acetylated histones H3 and H4. Binds butyrylated histone H4.

The protein resides in the nucleus. Functionally, plays a role in chromatin remodeling and regulation of transcription. Acts as a chromatin reader that recognizes and binds acylated histones: binds histones that are acetylated and/or butyrylated. The chain is Bromodomain-containing protein 9 (brd9) from Danio rerio (Zebrafish).